Here is a 287-residue protein sequence, read N- to C-terminus: 2-dehydro-3-deoxyphosphooctonate aldolase (287 aa).

The protein belongs to the KdsA family.

It is found in the cytoplasm. It catalyses the reaction D-arabinose 5-phosphate + phosphoenolpyruvate + H2O = 3-deoxy-alpha-D-manno-2-octulosonate-8-phosphate + phosphate. The protein operates within carbohydrate biosynthesis; 3-deoxy-D-manno-octulosonate biosynthesis; 3-deoxy-D-manno-octulosonate from D-ribulose 5-phosphate: step 2/3. Its pathway is bacterial outer membrane biogenesis; lipopolysaccharide biosynthesis. The polypeptide is 2-dehydro-3-deoxyphosphooctonate aldolase (Rhodopseudomonas palustris (strain HaA2)).